The sequence spans 795 residues: Protocadherin beta-5 (795 aa).

An N-terminal signal peptide occupies residues 1–30; the sequence is METALAKTPQKRQVMFLAILLLLWEAGSEA. The Extracellular segment spans residues 31–689; sequence VRYSIPEETE…AQADSLTVYL (659 aa). Cadherin domains are found at residues 35-133, 138-242, 247-346, 351-450, and 455-560; these read IPEE…APEF, MLLK…APEF, YEVQ…APEL, LSSP…APAF, and YTLF…SPFV. Asn-169 carries an N-linked (GlcNAc...) asparagine glycan. N6-acetyllysine is present on Lys-296. N-linked (GlcNAc...) asparagine glycans are attached at residues Asn-417 and Asn-435. A glycan (N-linked (GlcNAc...) asparagine) is linked at Asn-566. The Cadherin 6 domain occupies 567–670; it reads GSAPCTELVP…LVDGFSQPYL (104 aa). The chain crosses the membrane as a helical span at residues 690–710; that stretch reads VVALASVSSLFLFSVLLFVAV. The Cytoplasmic portion of the chain corresponds to 711–795; the sequence is RLCRRSRAAP…AAFRNSFGLN (85 aa).

It localises to the cell membrane. In terms of biological role, potential calcium-dependent cell-adhesion protein. May be involved in the establishment and maintenance of specific neuronal connections in the brain. This chain is Protocadherin beta-5 (PCDHB5), found in Homo sapiens (Human).